We begin with the raw amino-acid sequence, 273 residues long: Large ribosomal subunit protein uL2 (273 aa).

The interval 228 to 273 (VDHPHGGGEGKTSGGRHPVTPWGFPTKGKKTRKNKRTSKFIVKKRK) is disordered. Positions 254–273 (KGKKTRKNKRTSKFIVKKRK) are enriched in basic residues.

Belongs to the universal ribosomal protein uL2 family. In terms of assembly, part of the 50S ribosomal subunit. Forms a bridge to the 30S subunit in the 70S ribosome.

Functionally, one of the primary rRNA binding proteins. Required for association of the 30S and 50S subunits to form the 70S ribosome, for tRNA binding and peptide bond formation. It has been suggested to have peptidyltransferase activity; this is somewhat controversial. Makes several contacts with the 16S rRNA in the 70S ribosome. This is Large ribosomal subunit protein uL2 from Rickettsia africae (strain ESF-5).